Here is a 367-residue protein sequence, read N- to C-terminus: Uptake hydrogenase small subunit (367 aa).

The tat-type signal signal peptide spans 1 to 45 (MTPTETFYEVMRRQGVTRRSFLKFCSLTATALGLGPAYTSEIAHA). 8 residues coordinate [4Fe-4S] cluster: cysteine 62, cysteine 65, cysteine 160, cysteine 194, histidine 232, cysteine 235, cysteine 260, and cysteine 266. Positions 275, 294, and 297 each coordinate [3Fe-4S] cluster.

It belongs to the [NiFe]/[NiFeSe] hydrogenase small subunit family. As to quaternary structure, heterodimer of a large and a small subunit. The cofactor is [4Fe-4S] cluster. [3Fe-4S] cluster is required as a cofactor. Post-translationally, predicted to be exported by the Tat system. The position of the signal peptide cleavage has been experimentally proven.

The protein resides in the cell membrane. It catalyses the reaction H2 + A = AH2. In terms of biological role, this enzyme recycles the H(2) produced by nitrogenase to increase the production of ATP and to protect nitrogenase against inhibition or damage by O(2) under carbon- or phosphate-limited conditions. The polypeptide is Uptake hydrogenase small subunit (hoxS) (Afipia carboxidovorans (strain ATCC 49405 / DSM 1227 / KCTC 32145 / OM5) (Oligotropha carboxidovorans)).